Consider the following 347-residue polypeptide: Zinc finger protein CONSTANS-LIKE 2 (347 aa).

The Zn(2+) site is built by cysteine 16, cysteine 19, cysteine 39, histidine 44, cysteine 59, cysteine 62, cysteine 82, and histidine 87. A B box-type 1; atypical zinc finger spans residues 16-58; it reads CDTCRSAACTVYCEADSAYLCTTCDARVHAANRVASRHERVRV. The B box-type 2; atypical zinc-finger motif lies at 59–101; it reads CQSCESAPAAFLCKADAASLCTACDAEIHSANPLARRHQRVPI. The CCT domain maps to 278–320; that stretch reads REARVLRYREKKKTRKFDKTIRYASRKAYAEIRPRIKGRFAKR.

The protein belongs to the CONSTANS family. As to expression, highly expressed in leaves. Expressed at lower levels in stems, flowers and siliques. Not detected in roots.

It is found in the nucleus. Its function is as follows. Putative transcription factor. Does not affect flowering time. This chain is Zinc finger protein CONSTANS-LIKE 2 (COL2), found in Arabidopsis thaliana (Mouse-ear cress).